The following is a 103-amino-acid chain: Large ribosomal subunit protein bL21 (103 aa).

This sequence belongs to the bacterial ribosomal protein bL21 family. Part of the 50S ribosomal subunit. Contacts protein L20.

This protein binds to 23S rRNA in the presence of protein L20. The sequence is that of Large ribosomal subunit protein bL21 from Azotobacter vinelandii (strain DJ / ATCC BAA-1303).